The following is a 276-amino-acid chain: Formamidopyrimidine-DNA glycosylase (276 aa).

P2 serves as the catalytic Schiff-base intermediate with DNA. E3 serves as the catalytic Proton donor. The active-site Proton donor; for beta-elimination activity is the K60. Positions 93 and 112 each coordinate DNA. An FPG-type zinc finger spans residues 240–274 (HVYGRKQQPCHHCDTAIEKTVVGGRGTHYCPNCQP). R264 functions as the Proton donor; for delta-elimination activity in the catalytic mechanism.

The protein belongs to the FPG family. As to quaternary structure, monomer. It depends on Zn(2+) as a cofactor.

The catalysed reaction is Hydrolysis of DNA containing ring-opened 7-methylguanine residues, releasing 2,6-diamino-4-hydroxy-5-(N-methyl)formamidopyrimidine.. It carries out the reaction 2'-deoxyribonucleotide-(2'-deoxyribose 5'-phosphate)-2'-deoxyribonucleotide-DNA = a 3'-end 2'-deoxyribonucleotide-(2,3-dehydro-2,3-deoxyribose 5'-phosphate)-DNA + a 5'-end 5'-phospho-2'-deoxyribonucleoside-DNA + H(+). Its function is as follows. Involved in base excision repair of DNA damaged by oxidation or by mutagenic agents. Acts as a DNA glycosylase that recognizes and removes damaged bases. Has a preference for oxidized purines, such as 7,8-dihydro-8-oxoguanine (8-oxoG). Has AP (apurinic/apyrimidinic) lyase activity and introduces nicks in the DNA strand. Cleaves the DNA backbone by beta-delta elimination to generate a single-strand break at the site of the removed base with both 3'- and 5'-phosphates. The chain is Formamidopyrimidine-DNA glycosylase from Shouchella clausii (strain KSM-K16) (Alkalihalobacillus clausii).